The primary structure comprises 155 residues: Transcriptional repressor NrdR (155 aa).

The segment at 3-34 (CPFCNQTDTKVIDSRLVADGVQVRRRRECQAC) is a zinc-finger region. Positions 49–139 (PKVIKQDGTR…VYRSFQDISE (91 aa)) constitute an ATP-cone domain.

This sequence belongs to the NrdR family. It depends on Zn(2+) as a cofactor.

Functionally, negatively regulates transcription of bacterial ribonucleotide reductase nrd genes and operons by binding to NrdR-boxes. This chain is Transcriptional repressor NrdR, found in Teredinibacter turnerae (strain ATCC 39867 / T7901).